A 146-amino-acid polypeptide reads, in one-letter code: Large ribosomal subunit protein uL15 (146 aa).

The segment at 1–54 (MKLHELKPAAGSRKAPKRVGRGTGSGLGRNAGKGEKGQNARSGGGVRPGFEGGQ) is disordered. Gly residues-rich tracts occupy residues 21-31 (RGTGSGLGRNA) and 42-52 (SGGGVRPGFEG).

The protein belongs to the universal ribosomal protein uL15 family. As to quaternary structure, part of the 50S ribosomal subunit.

In terms of biological role, binds to the 23S rRNA. In Clostridium acetobutylicum (strain ATCC 824 / DSM 792 / JCM 1419 / IAM 19013 / LMG 5710 / NBRC 13948 / NRRL B-527 / VKM B-1787 / 2291 / W), this protein is Large ribosomal subunit protein uL15.